We begin with the raw amino-acid sequence, 56 residues long: Repressor-like protein SSo7c4 (56 aa).

The SpoVT-AbrB domain maps to 4 to 51 (EEIVKVSRNYQVTIPAKVRQKFQIKEGDLVKVTFDESGGVVKIQLLDS).

The sequence is that of Repressor-like protein SSo7c4 from Saccharolobus solfataricus (strain ATCC 35092 / DSM 1617 / JCM 11322 / P2) (Sulfolobus solfataricus).